The sequence spans 303 residues: NAD kinase (303 aa).

The active-site Proton acceptor is D85. NAD(+)-binding positions include 85-86, R90, 159-160, K187, D189, A224, and Q259; these read DG and ND.

Belongs to the NAD kinase family. It depends on a divalent metal cation as a cofactor.

Its subcellular location is the cytoplasm. The enzyme catalyses NAD(+) + ATP = ADP + NADP(+) + H(+). In terms of biological role, involved in the regulation of the intracellular balance of NAD and NADP, and is a key enzyme in the biosynthesis of NADP. Catalyzes specifically the phosphorylation on 2'-hydroxyl of the adenosine moiety of NAD to yield NADP. The chain is NAD kinase from Bdellovibrio bacteriovorus (strain ATCC 15356 / DSM 50701 / NCIMB 9529 / HD100).